Here is a 278-residue protein sequence, read N- to C-terminus: Large ribosomal subunit protein uL2 (278 aa).

The segment at 218–278 is disordered; it reads RPHNRGVVMN…IMRSRHQRKK (61 aa).

It belongs to the universal ribosomal protein uL2 family. As to quaternary structure, part of the 50S ribosomal subunit. Forms a bridge to the 30S subunit in the 70S ribosome.

In terms of biological role, one of the primary rRNA binding proteins. Required for association of the 30S and 50S subunits to form the 70S ribosome, for tRNA binding and peptide bond formation. It has been suggested to have peptidyltransferase activity; this is somewhat controversial. Makes several contacts with the 16S rRNA in the 70S ribosome. This chain is Large ribosomal subunit protein uL2, found in Rhizobium etli (strain ATCC 51251 / DSM 11541 / JCM 21823 / NBRC 15573 / CFN 42).